The sequence spans 256 residues: Eukaryotic translation initiation factor 3 subunit J (256 aa).

2 stretches are compositionally biased toward acidic residues: residues 1–14 and 35–54; these read MAEN…DFEP and EGED…EEAE. 2 disordered regions span residues 1-109 and 214-237; these read MAEN…SPEE and QSKA…MKND. The segment covering 55-101 has biased composition (basic and acidic residues); that stretch reads AATKQEAQKTVEPKVSEKKKLLEKIREKEKLHKKRQEEVNQQEKEGT. The stretch at 70–99 forms a coiled coil; it reads SEKKKLLEKIREKEKLHKKRQEEVNQQEKE.

The protein belongs to the eIF-3 subunit J family. Component of the eukaryotic translation initiation factor 3 (eIF-3) complex, which is composed of 13 subunits: eif3a, eif3b, eif3c, eif3d, eif3e, eif3f, eif3g, eif3h, eif3i, eif3j, eif3k, eif3l and eif3m.

It is found in the cytoplasm. Component of the eukaryotic translation initiation factor 3 (eIF-3) complex, which is involved in protein synthesis of a specialized repertoire of mRNAs and, together with other initiation factors, stimulates binding of mRNA and methionyl-tRNAi to the 40S ribosome. The eIF-3 complex specifically targets and initiates translation of a subset of mRNAs involved in cell proliferation. In Xenopus tropicalis (Western clawed frog), this protein is Eukaryotic translation initiation factor 3 subunit J (eif3j).